A 269-amino-acid polypeptide reads, in one-letter code: Monofunctional glycosyltransferase (269 aa).

Residues 46-66 traverse the membrane as a helical segment; the sequence is AIITILILLIIFFGVMYFISS.

The protein belongs to the glycosyltransferase 51 family.

The protein resides in the cell membrane. It carries out the reaction [GlcNAc-(1-&gt;4)-Mur2Ac(oyl-L-Ala-gamma-D-Glu-L-Lys-D-Ala-D-Ala)](n)-di-trans,octa-cis-undecaprenyl diphosphate + beta-D-GlcNAc-(1-&gt;4)-Mur2Ac(oyl-L-Ala-gamma-D-Glu-L-Lys-D-Ala-D-Ala)-di-trans,octa-cis-undecaprenyl diphosphate = [GlcNAc-(1-&gt;4)-Mur2Ac(oyl-L-Ala-gamma-D-Glu-L-Lys-D-Ala-D-Ala)](n+1)-di-trans,octa-cis-undecaprenyl diphosphate + di-trans,octa-cis-undecaprenyl diphosphate + H(+). The protein operates within cell wall biogenesis; peptidoglycan biosynthesis. In terms of biological role, peptidoglycan polymerase that catalyzes glycan chain elongation using lipid-linked disaccharide-pentapeptide as the substrate. In Staphylococcus epidermidis (strain ATCC 35984 / DSM 28319 / BCRC 17069 / CCUG 31568 / BM 3577 / RP62A), this protein is Monofunctional glycosyltransferase.